The sequence spans 162 residues: MARVEL domain-containing protein 1 (162 aa).

The Cytoplasmic segment spans residues Met-1 to Ser-17. Residues Phe-14 to Cys-155 enclose the MARVEL domain. Residues Phe-18 to Ala-38 form a helical membrane-spanning segment. At Ala-39–His-47 the chain is on the extracellular side. The chain crosses the membrane as a helical span at residues Phe-48–Leu-68. At Leu-69–Ser-86 the chain is on the cytoplasmic side. A helical membrane pass occupies residues Asn-87–Tyr-107. At Lys-108–Lys-127 the chain is on the extracellular side. A helical transmembrane segment spans residues Val-128–Ile-148. Topologically, residues Tyr-149 to Val-162 are cytoplasmic.

It is found in the membrane. It localises to the nucleus. The protein is MARVEL domain-containing protein 1 (marveld1) of Danio rerio (Zebrafish).